The following is a 348-amino-acid chain: MGHCYYNETIGFFYNNSGKELSSHWRPKDVVVVALGLTVSVLVLLTNLLVIAAIASNRRFHQPIYYLLGNLAAADLFAGVAYLFLMFHTGPRTARLSLEGWFLRQGLLDTSLTASVATLLAIAVERRRSVMAVQLHSRLPRGRVVMLIVGVWVAALGLGLLPAHSWHCLCALDRCSRMAPLLSRSYLAVWALSSLLVFLLMVAVYTRIFFYVRRRVQRMAEHVSCHPRYRETTLSLVKTVVIILGAFVVCWTPGQVVLLLDGLGCKSCNVLAVEKYFLLLAEANSLVNAAVYSCRDAEMRRTFRRLLCCACLRRSTRESAHYTSSAQGGASTRIMLPENGHPLMDSTL.

Over 1–30 the chain is Extracellular; the sequence is MGHCYYNETIGFFYNNSGKELSSHWRPKDV. Asparagine 7 and asparagine 15 each carry an N-linked (GlcNAc...) asparagine glycan. Residues 31–51 form a helical membrane-spanning segment; the sequence is VVVALGLTVSVLVLLTNLLVI. The Cytoplasmic segment spans residues 52 to 66; that stretch reads AAIASNRRFHQPIYY. A helical membrane pass occupies residues 67–87; sequence LLGNLAAADLFAGVAYLFLMF. The Extracellular segment spans residues 88–104; that stretch reads HTGPRTARLSLEGWFLR. Residues 105-124 form a helical membrane-spanning segment; sequence QGLLDTSLTASVATLLAIAV. The Cytoplasmic portion of the chain corresponds to 125–143; sequence ERRRSVMAVQLHSRLPRGR. The chain crosses the membrane as a helical span at residues 144-164; the sequence is VVMLIVGVWVAALGLGLLPAH. Residues 165 to 185 are Extracellular-facing; that stretch reads SWHCLCALDRCSRMAPLLSRS. The chain crosses the membrane as a helical span at residues 186–206; sequence YLAVWALSSLLVFLLMVAVYT. Over 207–239 the chain is Cytoplasmic; that stretch reads RIFFYVRRRVQRMAEHVSCHPRYRETTLSLVKT. Residues 240 to 260 form a helical membrane-spanning segment; that stretch reads VVIILGAFVVCWTPGQVVLLL. Topologically, residues 261 to 276 are extracellular; that stretch reads DGLGCKSCNVLAVEKY. The helical transmembrane segment at 277–294 threads the bilayer; sequence FLLLAEANSLVNAAVYSC. At 295–348 the chain is on the cytoplasmic side; the sequence is RDAEMRRTFRRLLCCACLRRSTRESAHYTSSAQGGASTRIMLPENGHPLMDSTL. Cysteine 308 carries S-palmitoyl cysteine lipidation. A PDZ-binding motif is present at residues 345–348; the sequence is DSTL.

Belongs to the G-protein coupled receptor 1 family. As to quaternary structure, interacts with SLC9A3R2/NHERF2, MAGI3 and PLCB3. Interacts with RALA and GRK2.

Its subcellular location is the cell surface. The protein localises to the cell membrane. Receptor for lysophosphatidic acid (LPA), a mediator of diverse cellular activities. Seems to be coupled to the G(i)/G(o), G(12)/G(13), and G(q) families of heteromeric G proteins. Plays a key role in phospholipase C-beta (PLC-beta) signaling pathway. Stimulates phospholipase C (PLC) activity in a manner that is independent of RALA activation. The chain is Lysophosphatidic acid receptor 2 from Macaca fascicularis (Crab-eating macaque).